The sequence spans 388 residues: MKIHEYQGKEILRKFGVAVPRGKPAFSVDEAVKVAEELGGPVWVVKAQIHAGGRGKGGGVKVAKTIEQVREYANQILGMQLVTHQTGPEGQKVNRLLIEEGADIKQELYVSLVVDRVSQKIVLMGSSEGGMDIEEVAEKHPELIHKVIVEPSTGLLDAQADDLAAKIGVPAASIPQARTILQGLYKAFWETDASLAEINPLNVSGDGKVTALDAKFNFDSNALFRHPEIVAYRDLDEEDPAEIEASKFDLAYISLDGNIGCLVNGAGLAMATMDTIKLFGGEPANFLDVGGGATTEKVTEAFKLMLKNPGLKAILVNIFGGIMRCDVIAEGVIAGSKAVNLNVPLVVRMKGTNEDLGKKMLADSGLPIISADSMEEAAQKVVAAAAGK.

Positions 9-244 (KEILRKFGVA…LDEEDPAEIE (236 aa)) constitute an ATP-grasp domain. Residues K46, 53–55 (GRG), E99, A102, and E107 contribute to the ATP site. Mg(2+) contacts are provided by N199 and D213. Substrate-binding positions include N264 and 321 to 323 (GIM).

It belongs to the succinate/malate CoA ligase beta subunit family. Heterotetramer of two alpha and two beta subunits. The cofactor is Mg(2+).

The catalysed reaction is succinate + ATP + CoA = succinyl-CoA + ADP + phosphate. The enzyme catalyses GTP + succinate + CoA = succinyl-CoA + GDP + phosphate. It functions in the pathway carbohydrate metabolism; tricarboxylic acid cycle; succinate from succinyl-CoA (ligase route): step 1/1. Succinyl-CoA synthetase functions in the citric acid cycle (TCA), coupling the hydrolysis of succinyl-CoA to the synthesis of either ATP or GTP and thus represents the only step of substrate-level phosphorylation in the TCA. The beta subunit provides nucleotide specificity of the enzyme and binds the substrate succinate, while the binding sites for coenzyme A and phosphate are found in the alpha subunit. The sequence is that of Succinate--CoA ligase [ADP-forming] subunit beta from Burkholderia vietnamiensis (strain G4 / LMG 22486) (Burkholderia cepacia (strain R1808)).